Reading from the N-terminus, the 306-residue chain is Transcription initiation factor IIB (306 aa).

2 consecutive repeat copies span residues 122-205 and 216-297.

It belongs to the TFIIB family.

Its function is as follows. Stabilizes TBP binding to an archaeal box-A promoter. Also responsible for recruiting RNA polymerase II to the pre-initiation complex (DNA-TBP-TFIIB). This chain is Transcription initiation factor IIB, found in Saccharolobus shibatae (strain ATCC 51178 / DSM 5389 / JCM 8931 / NBRC 15437 / B12) (Sulfolobus shibatae).